Consider the following 104-residue polypeptide: Iron-sulfur cluster assembly protein CyaY (104 aa).

Belongs to the frataxin family.

Involved in iron-sulfur (Fe-S) cluster assembly. May act as a regulator of Fe-S biogenesis. In Aliivibrio salmonicida (strain LFI1238) (Vibrio salmonicida (strain LFI1238)), this protein is Iron-sulfur cluster assembly protein CyaY.